The primary structure comprises 302 residues: Deoxyhypusine hydroxylase (302 aa).

6 HEAT-like PBS-type repeats span residues 23 to 49 (ERFR…AFDD), 54 to 80 (LKHE…VLKD), 87 to 113 (VRHE…YKQD), 175 to 201 (DRYR…GLKD), 206 to 232 (FRHE…NLED), and 239 to 265 (VRHE…YAED). The Fe cation site is built by His-56, Glu-57, His-89, and Glu-90. 4 residues coordinate Fe cation: His-208, Glu-209, His-241, and Glu-242.

The protein belongs to the deoxyhypusine hydroxylase family. It depends on Fe(2+) as a cofactor.

The protein resides in the endoplasmic reticulum membrane. The catalysed reaction is [eIF5A protein]-deoxyhypusine + AH2 + O2 = [eIF5A protein]-hypusine + A + H2O. Its pathway is protein modification; eIF5A hypusination. Its function is as follows. Catalyzes the hydroxylation of the N(6)-(4-aminobutyl)-L-lysine intermediate to form hypusine, an essential post-translational modification only found in mature eIF-5A factor. Essential for organismal viability and plays a role in a wide number of important processes such as cell growth and proliferation, and regulates induction of autophagy and protein synthesis. Has a role in eIF-5A-mediated translational control. The chain is Deoxyhypusine hydroxylase from Drosophila melanogaster (Fruit fly).